The sequence spans 463 residues: L-seryl-tRNA(Sec) selenium transferase (463 aa).

Residue Lys294 is modified to N6-(pyridoxal phosphate)lysine.

It belongs to the SelA family. The cofactor is pyridoxal 5'-phosphate.

The protein resides in the cytoplasm. The catalysed reaction is L-seryl-tRNA(Sec) + selenophosphate + H(+) = L-selenocysteinyl-tRNA(Sec) + phosphate. Its pathway is aminoacyl-tRNA biosynthesis; selenocysteinyl-tRNA(Sec) biosynthesis; selenocysteinyl-tRNA(Sec) from L-seryl-tRNA(Sec) (bacterial route): step 1/1. In terms of biological role, converts seryl-tRNA(Sec) to selenocysteinyl-tRNA(Sec) required for selenoprotein biosynthesis. This is L-seryl-tRNA(Sec) selenium transferase from Hyphomonas neptunium (strain ATCC 15444).